The primary structure comprises 633 residues: NADPH-dependent diflavin oxidoreductase 1 (633 aa).

The region spanning 5 to 149 (CTIIYATESG…EVEKWSQELI (145 aa)) is the Flavodoxin-like domain. FMN is bound by residues 11 to 16 (TESGTS), 58 to 61 (STTG), and D131. An FAD-binding FR-type domain is found at 196–442 (TQFYKSKLKV…FIKESGARLP (247 aa)). Residues 377-380 (RPFS) and 412-415 (GLCS) contribute to the FAD site. Residues T456, 520–521 (SR), 528–532 (KVYVQ), and D565 each bind NADP(+). A disordered region spans residues 580–610 (KNNNNNNNNNNNNNNNNNNNNNNNNNDDENN). The span at 581–604 (NNNNNNNNNNNNNNNNNNNNNNNN) shows a compositional bias: low complexity. W633 provides a ligand contact to FAD.

Belongs to the NADPH-dependent diflavin oxidoreductase NDOR1 family. The protein in the N-terminal section; belongs to the flavodoxin family. It in the C-terminal section; belongs to the flavoprotein pyridine nucleotide cytochrome reductase family. FAD is required as a cofactor. FMN serves as cofactor.

It localises to the cytoplasm. The enzyme catalyses 2 oxidized [2Fe-2S]-[protein] + NADPH = 2 reduced [2Fe-2S]-[protein] + NADP(+) + H(+). In terms of biological role, NADPH-dependent reductase which is a central component of the cytosolic iron-sulfur (Fe-S) protein assembly (CIA) machinery. Transfers electrons from NADPH via its FAD and FMN prosthetic groups to the [2Fe-2S] cluster of the anamorsin/DRE2 homolog, another key component of the CIA machinery. In turn, this reduced cluster provides electrons for assembly of cytosolic iron-sulfur cluster proteins. This Dictyostelium discoideum (Social amoeba) protein is NADPH-dependent diflavin oxidoreductase 1 (redC).